A 322-amino-acid polypeptide reads, in one-letter code: Sideroflexin-1 (322 aa).

Serine 2 carries the N-acetylserine modification. The Mitochondrial matrix segment spans residues serine 2–threonine 102. The chain crosses the membrane as a helical span at residues isoleucine 103–tryptophan 120. Residues glutamine 121–glutamate 146 lie on the Mitochondrial intermembrane side of the membrane. A helical membrane pass occupies residues leucine 147 to alanine 167. Residues leucine 168 to proline 174 lie on the Mitochondrial matrix side of the membrane. A helical transmembrane segment spans residues leucine 175–leucine 195. Over methionine 196–glutamine 228 the chain is Mitochondrial intermembrane. Residues valine 229–asparagine 249 form a helical membrane-spanning segment. Residues threonine 250–proline 266 lie on the Mitochondrial matrix side of the membrane. The helical transmembrane segment at isoleucine 267–phenylalanine 287 threads the bilayer. Residues proline 288–leucine 322 lie on the Mitochondrial intermembrane side of the membrane.

Belongs to the sideroflexin family. As to expression, highly expressed in tissues with high one-carbon metabolism activity, such as blood, liver and kidney.

It is found in the mitochondrion inner membrane. The enzyme catalyses L-serine(in) = L-serine(out). It catalyses the reaction L-alanine(in) = L-alanine(out). The catalysed reaction is L-cysteine(in) = L-cysteine(out). Its function is as follows. Amino acid transporter importing serine, an essential substrate of the mitochondrial branch of the one-carbon pathway, into mitochondria. Mitochondrial serine is then converted to glycine and formate, which exits to the cytosol where it is used to generate the charged folates that serve as one-carbon donors. May also transport other amino acids including alanine and cysteine. This chain is Sideroflexin-1, found in Homo sapiens (Human).